The following is a 1262-amino-acid chain: Zinc finger protein 592 (1262 aa).

Positions 23 to 45 (SLDAKEAIQAPSEENESPLKSSG) are disordered. Residues Ser-78, Ser-142, Ser-145, and Ser-146 each carry the phosphoserine modification. Disordered stretches follow at residues 122-174 (SFTS…PPPG), 200-278 (KKEP…AHSK), and 294-494 (VANV…ASTP). Residues Lys-200 and Lys-204 each participate in a glycyl lysine isopeptide (Lys-Gly) (interchain with G-Cter in SUMO2) cross-link. Composition is skewed to basic and acidic residues over residues 213-232 (QQEH…DLDS) and 298-308 (TKEDQPGHTKD). A compositionally biased stretch (low complexity) spans 343-367 (PSDSPRSICSDSSSKGSPSVAASSP). A compositionally biased stretch (polar residues) spans 454 to 463 (IKTSDSSSPC). Over residues 484–494 (QQSTAPQASTP) the composition is skewed to low complexity. At Ser-529 the chain carries Phosphoserine. Residue Lys-546 forms a Glycyl lysine isopeptide (Lys-Gly) (interchain with G-Cter in SUMO2) linkage. Ser-573 bears the Phosphoserine mark. Residues 587–612 (YCCLECGDAFALEKSLSQHYSRRSVH) form a C2H2-type 1; atypical zinc finger. A C2H2-type 2; atypical zinc finger spans residues 615 to 639 (VLCTLCSKTLLFFNKCSLLRHARDH). Ser-691 carries the phosphoserine modification. The C2H2-type 3; degenerate zinc finger occupies 711-731 (TKCPECHKQMRDYMVLATHFQ). The segment at 740 to 764 (LTCQVCQMLLPNQCSFCAHQRIHAH) adopts a C2H2-type 4 zinc-finger fold. A C2H2-type 5; atypical zinc finger spans residues 768–790 (YCCPECGVLCRSAYFQTHVKENC). C2H2-type zinc fingers lie at residues 799–822 (YRCI…QERH), 827–850 (HKCA…TTQH), and 892–915 (FKCP…KNTH). Positions 924–935 (LSSLQSSTDTSS) are enriched in low complexity. Residues 924 to 979 (LSSLQSSTDTSSNRPGSRAPAEPPATNVAARGSSLTAGRWGRPEAHRRAEARPRMR) are disordered. Basic and acidic residues predominate over residues 964–976 (GRPEAHRRAEARP). 2 C2H2-type zinc fingers span residues 983–1006 (WTCQ…KKSH) and 1013–1036 (YPCR…RNNH). Residues 1043-1069 (YTCGYCTEDSPSFPRPSLLESHISLMH) form a C2H2-type 11; atypical zinc finger. The residue at position 1089 (Ser-1089) is a Phosphoserine. Residues 1124-1146 (FQCAKCTFATDSELEFQSHIPQH) form a C2H2-type 12; atypical zinc finger. A C2H2-type 13 zinc finger spans residues 1153 to 1176 (AQCLLCGLCYTSTSSLNRHLFIVH). Phosphoserine is present on residues Ser-1198 and Ser-1202. A disordered region spans residues 1222 to 1262 (PLVTDLGGQQGLALDEDSAQDPQNQPQASQDQNSHALSPQV). The segment covering 1241 to 1262 (QDPQNQPQASQDQNSHALSPQV) has biased composition (polar residues).

Belongs to the krueppel C2H2-type zinc-finger protein family. In terms of assembly, interacts with ZMYND8. Expressed in the brain.

The protein localises to the nucleus. In terms of biological role, may be involved in transcriptional regulation. This is Zinc finger protein 592 (Znf592) from Mus musculus (Mouse).